The chain runs to 79 residues: MKTLLLTLVVMTIMCLDLGYTLTCYMNPSGTMVCKEHETMCYQLIVWTFQYRVLYLKGCTSSCPEGNNRACCSTGLCNN.

The first 21 residues, 1 to 21, serve as a signal peptide directing secretion; that stretch reads MKTLLLTLVVMTIMCLDLGYT. Disulfide bonds link cysteine 24/cysteine 41, cysteine 34/cysteine 59, cysteine 63/cysteine 71, and cysteine 72/cysteine 77.

This sequence belongs to the three-finger toxin family. Short-chain subfamily. Expressed by the venom gland.

It localises to the secreted. The polypeptide is Scutelatoxin (Oxyuranus scutellatus scutellatus (Australian taipan)).